A 470-amino-acid chain; its full sequence is 63 kDa sperm flagellar membrane protein (470 aa).

An N-terminal signal peptide occupies residues 1–25; the sequence is MFCHLHCMLVVFSLLLTLTGSFVNA. The EGF-like 1 domain maps to 41-80; sequence PPDPCASNPCTIASTHCVAAGESHTCECRPGYFETNGNCT. Intrachain disulfides connect Cys-45–Cys-57, Cys-50–Cys-66, and Cys-68–Cys-79. N-linked (GlcNAc...) asparagine glycosylation is found at Asn-78, Asn-170, and Asn-219. The SEA domain maps to 81–205; that stretch reads VAQQFAGSFS…STITVSDFDE (125 aa). In terms of domain architecture, EGF-like 2; calcium-binding spans 202–250; it reads DFDECASADDNDCDPNANCTNTAGSFTCECDTELYDNSPNTEEPGRVCI. 6 disulfides stabilise this stretch: Cys-206–Cys-220, Cys-214–Cys-229, Cys-231–Cys-249, Cys-253–Cys-265, Cys-258–Cys-277, and Cys-279–Cys-291. Residues 249 to 292 form the EGF-like 3 domain; that stretch reads CIAPCDPGLCTRPNEICNNGGTIEDDNLCKCIEGYDYTQYGDCD. Residue Asn-322 is glycosylated (N-linked (GlcNAc...) asparagine). Residue Gly-446 is the site of GPI-anchor amidated glycine attachment. The propeptide at 447-470 is removed in mature form; the sequence is SQRHLPVCGVLSLVVTTLLALMLH.

Sperm.

It is found in the cell projection. Its subcellular location is the cilium. The protein localises to the flagellum membrane. This chain is 63 kDa sperm flagellar membrane protein, found in Strongylocentrotus purpuratus (Purple sea urchin).